We begin with the raw amino-acid sequence, 256 residues long: Trans-aconitate 2-methyltransferase (256 aa).

This sequence belongs to the methyltransferase superfamily. Tam family.

The protein resides in the cytoplasm. It catalyses the reaction trans-aconitate + S-adenosyl-L-methionine = (E)-3-(methoxycarbonyl)pent-2-enedioate + S-adenosyl-L-homocysteine. In terms of biological role, catalyzes the S-adenosylmethionine monomethyl esterification of trans-aconitate. This Rhodopseudomonas palustris (strain BisB18) protein is Trans-aconitate 2-methyltransferase.